Here is a 103-residue protein sequence, read N- to C-terminus: Large ribosomal subunit protein bL21 (103 aa).

The protein belongs to the bacterial ribosomal protein bL21 family. In terms of assembly, part of the 50S ribosomal subunit. Contacts protein L20.

In terms of biological role, this protein binds to 23S rRNA in the presence of protein L20. This Bordetella avium (strain 197N) protein is Large ribosomal subunit protein bL21.